Reading from the N-terminus, the 360-residue chain is Histidinol-phosphate aminotransferase (360 aa).

Lysine 223 bears the N6-(pyridoxal phosphate)lysine mark.

The protein belongs to the class-II pyridoxal-phosphate-dependent aminotransferase family. Histidinol-phosphate aminotransferase subfamily. As to quaternary structure, homodimer. Pyridoxal 5'-phosphate is required as a cofactor.

The catalysed reaction is L-histidinol phosphate + 2-oxoglutarate = 3-(imidazol-4-yl)-2-oxopropyl phosphate + L-glutamate. The protein operates within amino-acid biosynthesis; L-histidine biosynthesis; L-histidine from 5-phospho-alpha-D-ribose 1-diphosphate: step 7/9. The polypeptide is Histidinol-phosphate aminotransferase (Bacillus velezensis (strain DSM 23117 / BGSC 10A6 / LMG 26770 / FZB42) (Bacillus amyloliquefaciens subsp. plantarum)).